The sequence spans 229 residues: Ribulose-phosphate 3-epimerase (229 aa).

Residue S13 coordinates substrate. Positions 36, 38, and 69 each coordinate a divalent metal cation. D38 (proton acceptor) is an active-site residue. Residues H69, 145–148 (GFGG), 178–180 (DGG), and 200–201 (GS) contribute to the substrate site. An a divalent metal cation-binding site is contributed by D178. D178 (proton donor) is an active-site residue.

Belongs to the ribulose-phosphate 3-epimerase family. The cofactor is a divalent metal cation.

The enzyme catalyses D-ribulose 5-phosphate = D-xylulose 5-phosphate. Its pathway is carbohydrate degradation. Functionally, catalyzes the reversible epimerization of D-ribulose 5-phosphate to D-xylulose 5-phosphate. In Mycobacterium bovis (strain ATCC BAA-935 / AF2122/97), this protein is Ribulose-phosphate 3-epimerase.